Here is a 336-residue protein sequence, read N- to C-terminus: MSRVTLSRYLIEQTRSHNTPADLRFLIEVVARACKEISHAVSKGALGGVLGSMGTENVQGEVQKKLDVMSNEILLEANEWAGNLAGMASEEMDHPYQIPGRYPKGAYLLVFDPLDGSSNIDVNVSVGTIFSVLRCPSEYLNQNDTLREEAFLQPGTTQVAAGYAIYGPQTMLMLTLGNGVKGFTLDRELGSFVLTHDNISVPESTAEFAINMSNQRHWEAPVKRYVEELLAGKEGPLGKNYNMRWIASMVADVHRILTRGGVFMYPRDAREPEKPGKLRLMYEANPMSFIIEQAGGAATNGTQRILDIKPENLHQRVAVFLGSKQEVERITGYHAE.

Residues Glu90, Asp112, Leu114, and Asp115 each contribute to the Mg(2+) site. Substrate is bound by residues 115–118 (DGSS), Asn211, and Lys277. Glu283 contributes to the Mg(2+) binding site.

This sequence belongs to the FBPase class 1 family. In terms of assembly, homotetramer. Mg(2+) is required as a cofactor.

The protein resides in the cytoplasm. The enzyme catalyses beta-D-fructose 1,6-bisphosphate + H2O = beta-D-fructose 6-phosphate + phosphate. Its pathway is carbohydrate biosynthesis; gluconeogenesis. The protein is Fructose-1,6-bisphosphatase class 1 of Pseudomonas aeruginosa (strain UCBPP-PA14).